Here is a 143-residue protein sequence, read N- to C-terminus: Pathogenesis-related protein P2 (143 aa).

A signal peptide spans 1–23 (MERVNKLCVAFFVINMMMAVAAA). The Barwin domain maps to 24–143 (QSATNVRATY…LNVNYEFVNC (120 aa)). Cystine bridges form between Cys-52–Cys-84, Cys-73–Cys-107, and Cys-87–Cys-143.

Its subcellular location is the secreted. It localises to the cell wall. This chain is Pathogenesis-related protein P2, found in Solanum lycopersicum (Tomato).